An 80-amino-acid polypeptide reads, in one-letter code: NAD(P)H-quinone oxidoreductase subunit O (80 aa).

The protein belongs to the complex I NdhO subunit family. As to quaternary structure, NDH-1 can be composed of about 15 different subunits; different subcomplexes with different compositions have been identified which probably have different functions.

The protein localises to the cellular thylakoid membrane. It carries out the reaction a plastoquinone + NADH + (n+1) H(+)(in) = a plastoquinol + NAD(+) + n H(+)(out). The catalysed reaction is a plastoquinone + NADPH + (n+1) H(+)(in) = a plastoquinol + NADP(+) + n H(+)(out). In terms of biological role, NDH-1 shuttles electrons from an unknown electron donor, via FMN and iron-sulfur (Fe-S) centers, to quinones in the respiratory and/or the photosynthetic chain. The immediate electron acceptor for the enzyme in this species is believed to be plastoquinone. Couples the redox reaction to proton translocation, and thus conserves the redox energy in a proton gradient. Cyanobacterial NDH-1 also plays a role in inorganic carbon-concentration. This chain is NAD(P)H-quinone oxidoreductase subunit O, found in Prochlorococcus marinus (strain MIT 9515).